The following is a 423-amino-acid chain: Transducer protein Htr13 (423 aa).

Polar residues predominate over residues 1 to 19 (MTGPDNSLTDPSASPSTPV). Residues 1–21 (MTGPDNSLTDPSASPSTPVAS) form a disordered region. Residues 152 to 388 (AVAELIERAR…ELTMMIDEAA (237 aa)) enclose the Methyl-accepting transducer domain.

This sequence belongs to the methyl-accepting chemotaxis (MCP) protein family. Methylated by CheR.

The protein resides in the cytoplasm. Potentially involved in chemo- or phototactic signal transduction. The polypeptide is Transducer protein Htr13 (htr13) (Halobacterium salinarum (strain ATCC 29341 / DSM 671 / R1)).